A 118-amino-acid polypeptide reads, in one-letter code: Aspartate 1-decarboxylase (118 aa).

S25 acts as the Schiff-base intermediate with substrate; via pyruvic acid in catalysis. The residue at position 25 (S25) is a Pyruvic acid (Ser). T57 is a binding site for substrate. The active-site Proton donor is Y58. 73–75 (GAA) contacts substrate.

The protein belongs to the PanD family. As to quaternary structure, heterooctamer of four alpha and four beta subunits. It depends on pyruvate as a cofactor. Post-translationally, is synthesized initially as an inactive proenzyme, which is activated by self-cleavage at a specific serine bond to produce a beta-subunit with a hydroxyl group at its C-terminus and an alpha-subunit with a pyruvoyl group at its N-terminus.

Its subcellular location is the cytoplasm. It carries out the reaction L-aspartate + H(+) = beta-alanine + CO2. The protein operates within cofactor biosynthesis; (R)-pantothenate biosynthesis; beta-alanine from L-aspartate: step 1/1. Functionally, catalyzes the pyruvoyl-dependent decarboxylation of aspartate to produce beta-alanine. In Porphyromonas gingivalis (strain ATCC 33277 / DSM 20709 / CIP 103683 / JCM 12257 / NCTC 11834 / 2561), this protein is Aspartate 1-decarboxylase.